The sequence spans 814 residues: Protein kinase C-binding protein NELL2 (814 aa).

Residues 1–19 (MEFILGIFCVIFCLRAGAG) form the signal peptide. N51, N223, and N296 each carry an N-linked (GlcNAc...) asparagine glycan. Positions 53-226 (SKAFLFQDTS…SQCPDLNRTC (174 aa)) constitute a Laminin G-like domain. A VWFC 1 domain is found at 270 to 329 (RSCTVKGNIYRELESWMDGCKKCTCTNGTAQCETLTCSVPNCLSGFAPAYVPGKCCKECQ). Residues 395 to 437 (GHDFCSEGHNCVEYSICKNLNDKAVCICRDGFRALREDSAYCE) form the EGF-like 1 domain. Cystine bridges form between C399-C411, C405-C420, and C422-C436. D438, I439, and E441 together coordinate Ca(2+). In terms of domain architecture, EGF-like 2; calcium-binding spans 438 to 479 (DIDECTEGRHYCRENTVCVNTPGSFMCVCQTGYLKIDDYSCT). 9 cysteine pairs are disulfide-bonded: C442–C455, C449–C464, C466–C478, C484–C497, C491–C506, C508–C519, C523–C533, C527–C539, and C541–C550. Residues N457, T458, and S461 each contribute to the Ca(2+) site. The EGF-like 3; calcium-binding domain occupies 480-520 (EHNECATNQHSCDENAVCYNTVGGHNCVCQPGYTGNGTVCK). Residue N515 is glycosylated (N-linked (GlcNAc...) asparagine). Residues 521–551 (AFCTDGCRNGGTCIAPNICACPQGFTGPSCE) enclose the EGF-like 4 domain. Positions 553, 554, and 556 each coordinate Ca(2+). In terms of domain architecture, EGF-like 5; calcium-binding spans 553–599 (DIDECTEGFVQCDSRANCINLPGWYHCECRDGYHDNGMFSLSGESCE). 3 disulfides stabilise this stretch: C557/C570, C564/C579, and C581/C598. The Ca(2+) site is built by N572, L573, and W576. Ca(2+) is bound by residues D600, I601, and E603. Residues 600–635 (DIDECATGRHSCSNDTVCFNLDGGFDCRCPHGKNCS) enclose the EGF-like 6; calcium-binding domain. 3 disulfides stabilise this stretch: C604–C617, C611–C626, and C628–C634. The N-linked (GlcNAc...) asparagine glycan is linked to N613. Ca(2+) contacts are provided by N619, L620, and G623. N633 carries N-linked (GlcNAc...) asparagine glycosylation. VWFC domains lie at 636 to 691 (GDCT…PECD) and 696 to 754 (SQCL…PRCI).

In terms of assembly, homotrimer.

It is found in the secreted. In terms of biological role, may regulate neuronal differentiation, polarization and axon guidance. The protein is Protein kinase C-binding protein NELL2 (nell2) of Xenopus tropicalis (Western clawed frog).